The chain runs to 230 residues: Cytidylate kinase (230 aa).

Position 10–18 (10–18 (GPAGSGKST)) interacts with ATP.

Belongs to the cytidylate kinase family. Type 1 subfamily.

It localises to the cytoplasm. It catalyses the reaction CMP + ATP = CDP + ADP. It carries out the reaction dCMP + ATP = dCDP + ADP. This Leptospira borgpetersenii serovar Hardjo-bovis (strain L550) protein is Cytidylate kinase.